We begin with the raw amino-acid sequence, 60 residues long: Cecropin-B type 2 (60 aa).

An N-terminal signal peptide occupies residues 1–24; that stretch reads MNFSKLFALVLLIGLVLLTGQTEA. Ile58 is subject to Isoleucine amide.

This sequence belongs to the cecropin family.

The protein localises to the secreted. Its function is as follows. Cecropins have lytic and antibacterial activity against several Gram-positive and Gram-negative bacteria. This is Cecropin-B type 2 (CECB2) from Aedes albopictus (Asian tiger mosquito).